The primary structure comprises 284 residues: Bifunctional protein FolD (284 aa).

Residues G165–S167, S190, and I231 contribute to the NADP(+) site.

The protein belongs to the tetrahydrofolate dehydrogenase/cyclohydrolase family. As to quaternary structure, homodimer.

The enzyme catalyses (6R)-5,10-methylene-5,6,7,8-tetrahydrofolate + NADP(+) = (6R)-5,10-methenyltetrahydrofolate + NADPH. The catalysed reaction is (6R)-5,10-methenyltetrahydrofolate + H2O = (6R)-10-formyltetrahydrofolate + H(+). Its pathway is one-carbon metabolism; tetrahydrofolate interconversion. Its function is as follows. Catalyzes the oxidation of 5,10-methylenetetrahydrofolate to 5,10-methenyltetrahydrofolate and then the hydrolysis of 5,10-methenyltetrahydrofolate to 10-formyltetrahydrofolate. The polypeptide is Bifunctional protein FolD (Polynucleobacter asymbioticus (strain DSM 18221 / CIP 109841 / QLW-P1DMWA-1) (Polynucleobacter necessarius subsp. asymbioticus)).